The primary structure comprises 256 residues: Protein CC2D2B homolog (256 aa).

The segment at 1 to 24 is disordered; it reads MSEEMDNVTAEEITDKHLQKDLDA. Residues 13–22 show a composition bias toward basic and acidic residues; sequence ITDKHLQKDL. 2 coiled-coil regions span residues 136–159 and 194–214; these read DLLK…KANI and EIYK…EEGK.

The chain is Protein CC2D2B homolog from Macaca fascicularis (Crab-eating macaque).